The sequence spans 825 residues: Translation initiation factor IF-2 (825 aa).

Basic and acidic residues-rich tracts occupy residues 1–19, 35–45, 70–98, and 113–122; these read MTKKQENETSKELGMDNKK, RKGEKKTEGKR, LLKDLKQKQRADEARLDQESKAAKQEYKK, and KKVESVEKPA. The interval 1-239 is disordered; it reads MTKKQENETS…TQRKDRPLPE (239 aa). Positions 158 to 169 are enriched in low complexity; it reads PSSSRRPSSRPS. Basic residues predominate over residues 181 to 191; sequence GRRRKSGKPGR. Residues 194 to 208 show a composition bias toward polar residues; it reads QNSYADQGRGANSNR. Basic residues predominate over residues 211–220; the sequence is QRKRKNKKHQ. The tr-type G domain occupies 326–495; the sequence is VRPPVVTIMG…ILEADMLELK (170 aa). Residues 335 to 342 are G1; sequence GHVDHGKT. 335–342 lines the GTP pocket; sequence GHVDHGKT. The interval 360–364 is G2; the sequence is GITQN. The interval 381 to 384 is G3; sequence DTPG. Residues 381 to 385 and 435 to 438 each bind GTP; these read DTPGH and NKMD. The interval 435 to 438 is G4; that stretch reads NKMD. A G5 region spans residues 471-473; it reads SAK.

This sequence belongs to the TRAFAC class translation factor GTPase superfamily. Classic translation factor GTPase family. IF-2 subfamily.

It is found in the cytoplasm. Functionally, one of the essential components for the initiation of protein synthesis. Protects formylmethionyl-tRNA from spontaneous hydrolysis and promotes its binding to the 30S ribosomal subunits. Also involved in the hydrolysis of GTP during the formation of the 70S ribosomal complex. The sequence is that of Translation initiation factor IF-2 from Lactobacillus delbrueckii subsp. bulgaricus (strain ATCC BAA-365 / Lb-18).